The chain runs to 152 residues: Small ribosomal subunit protein uS13z/uS13y/uS13x (152 aa).

An N-acetylserine modification is found at Ser2.

It belongs to the universal ribosomal protein uS13 family.

The protein localises to the cytoplasm. Its function is as follows. Located at the top of the head of the 40S subunit, it contacts several helices of the 18S rRNA. This is Small ribosomal subunit protein uS13z/uS13y/uS13x (RPS18A) from Arabidopsis thaliana (Mouse-ear cress).